A 317-amino-acid polypeptide reads, in one-letter code: MGNRHAKERSHHHGFDADRDAKKLYKACKGMGTDEAAIIEVLSSRTSEERQQIKQKYKEKYGKDLEEVLNSELSGNFKKTALALLDRPNEYAARQLQKAMKGVGTDEAMLIEILCTRSNKEIVAIKEAYQRLFGRSLESDVKEDTSGNLRKILVSLLQASRDEEDTVDKELAGQDAKDLYDAGEGRWGTDELAFNEVLAKRSYKQLRATFQAYQILIGKDMEETIEEETSGDLKKAYLTIVRCAQDLEGYFADLLYKAMKGMGTDEETLIRIIVTRAEVDLQGIKAKFQEKYQKSLSDMVHSDTSGDFRKLLVALLH.

A lipid anchor (N-myristoyl glycine) is attached at Gly-2. 4 Annexin repeats span residues 15–86 (FDAD…ALLD), 87–158 (RPNE…SLLQ), 170–242 (ELAG…TIVR), and 246–317 (DLEG…ALLH).

It belongs to the annexin family. Monomer and homodimer. In terms of tissue distribution, detected on the tips of microvilli in small intestine (at protein level).

It is found in the apical cell membrane. The protein resides in the cell membrane. The protein localises to the cytoplasmic vesicle. Functionally, binds to membranes enriched in phosphatidylserine or phosphatidylglycerol in a calcium-dependent manner. Half-maximal membrane binding requires about 60 uM calcium. Does not bind to membranes that lack phospholipids with an acidic headgroup. The sequence is that of Annexin A13 (Anxa13) from Mus musculus (Mouse).